The following is a 243-amino-acid chain: Small ribosomal subunit protein eS4 (243 aa).

One can recognise an S4 RNA-binding domain in the interval 43 to 105 (IPLIYIVRDY…TGEHYRVLPN (63 aa)).

The protein belongs to the eukaryotic ribosomal protein eS4 family. Part of the 30S ribosomal subunit.

The polypeptide is Small ribosomal subunit protein eS4 (Thermococcus kodakarensis (strain ATCC BAA-918 / JCM 12380 / KOD1) (Pyrococcus kodakaraensis (strain KOD1))).